Consider the following 266-residue polypeptide: Glucosamine-6-phosphate deaminase (266 aa).

The Proton acceptor; for enolization step role is filled by D72. The active-site For ring-opening step is the D141. H143 acts as the Proton acceptor; for ring-opening step in catalysis. E148 (for ring-opening step) is an active-site residue.

This sequence belongs to the glucosamine/galactosamine-6-phosphate isomerase family. NagB subfamily. As to quaternary structure, homohexamer.

The catalysed reaction is alpha-D-glucosamine 6-phosphate + H2O = beta-D-fructose 6-phosphate + NH4(+). It participates in amino-sugar metabolism; N-acetylneuraminate degradation; D-fructose 6-phosphate from N-acetylneuraminate: step 5/5. With respect to regulation, allosterically activated by N-acetylglucosamine 6-phosphate (GlcNAc6P). Functionally, catalyzes the reversible isomerization-deamination of glucosamine 6-phosphate (GlcN6P) to form fructose 6-phosphate (Fru6P) and ammonium ion. This is Glucosamine-6-phosphate deaminase from Yersinia pseudotuberculosis serotype O:1b (strain IP 31758).